Here is a 444-residue protein sequence, read N- to C-terminus: Orexin receptor type 2 (444 aa).

Positions 1–10 (MSGTKLEDSP) are enriched in basic and acidic residues. A disordered region spans residues 1 to 30 (MSGTKLEDSPPCRNWSSAPELNETQEPFLN). The Extracellular segment spans residues 1 to 54 (MSGTKLEDSPPCRNWSSAPELNETQEPFLNPTDYDDEEFLRYLWREYLHPKEYE). N-linked (GlcNAc...) asparagine glycans are attached at residues N14 and N22. Residues 14-27 (NWSSAPELNETQEP) are compositionally biased toward polar residues. Positions 33–49 (DYDDEEFLRYLWREYLH) are required for response to orexin-A. A helical membrane pass occupies residues 55-75 (WVLIAGYIIVFVVALVGNVLV). Over 76 to 88 (CVAVWKNHHMRTV) the chain is Cytoplasmic. Residues 89–110 (TNYFIVNLSLADVLVTITCLPA) traverse the membrane as a helical segment. Residues 111–127 (TLVVDITETWFFGQSLC) lie on the Extracellular side of the membrane. C127 and C210 are disulfide-bonded. Residues 128 to 150 (KVIPYLQTVSVSVSVLTLSCIAL) form a helical membrane-spanning segment. At 151–170 (DRWYAICHPLMFKSTAKRAR) the chain is on the cytoplasmic side. Residues 171–191 (NSIVIIWIVSCIIMIPQAIVM) traverse the membrane as a helical segment. The Extracellular segment spans residues 192 to 222 (ECSTMLPGLANKTTLFTVCDERWGGEIYPKM). The N-linked (GlcNAc...) asparagine glycan is linked to N202. A helical membrane pass occupies residues 223–243 (YHICFFLVTYMAPLCLMVLAY). Topologically, residues 244–304 (LQIFRKLWCR…QIRARRKTAR (61 aa)) are cytoplasmic. Residues 305–326 (MLMVVLLVFAICYLPISILNVL) form a helical membrane-spanning segment. The Extracellular portion of the chain corresponds to 327-342 (KRVFGMFTHTEDRETV). The chain crosses the membrane as a helical span at residues 343-366 (YAWFTFSHWLVYANSAANPIIYNF). Residues 367 to 444 (LSGKFREEFK…ANGAGPLQNW (78 aa)) are Cytoplasmic-facing.

The protein belongs to the G-protein coupled receptor 1 family.

The protein localises to the cell membrane. Functionally, nonselective, high-affinity receptor for both orexin-A and orexin-B neuropeptides. Triggers an increase in cytoplasmic Ca(2+) levels in response to orexin-A binding. This chain is Orexin receptor type 2 (HCRTR2), found in Canis lupus familiaris (Dog).